The primary structure comprises 89 residues: Dynein light chain 2, cytoplasmic (89 aa).

It belongs to the dynein light chain family.

The protein localises to the cytoplasm. It is found in the cytoskeleton. Acts as a non-catalytic accessory component of a dynein complex. The polypeptide is Dynein light chain 2, cytoplasmic (Cdlc2) (Drosophila melanogaster (Fruit fly)).